The primary structure comprises 163 residues: Probable ribosome biogenesis protein RLP24 (163 aa).

It belongs to the eukaryotic ribosomal protein eL24 family. As to quaternary structure, associated with nucleolar and cytoplasmic pre-60S particles. At the end of biogenesis it dissociates from cytoplasmic pre-60S particles and is likely to be exchanged for its ribosomal homolog, RPL24.

The protein localises to the nucleus. The protein resides in the nucleolus. Involved in the biogenesis of the 60S ribosomal subunit. Ensures the docking of GTPBP4/NOG1 to pre-60S particles. The polypeptide is Probable ribosome biogenesis protein RLP24 (RSL24D1) (Pongo abelii (Sumatran orangutan)).